We begin with the raw amino-acid sequence, 612 residues long: UvrABC system protein C (612 aa).

The GIY-YIG domain occupies 20–98 (THSGVYRMLD…IKQHRPKYNI (79 aa)). The region spanning 208–243 (SSVLEEISAKMYQASEDMEYEKAQVYRDQLVILRKL) is the UVR domain.

Belongs to the UvrC family. As to quaternary structure, interacts with UvrB in an incision complex.

It is found in the cytoplasm. The UvrABC repair system catalyzes the recognition and processing of DNA lesions. UvrC both incises the 5' and 3' sides of the lesion. The N-terminal half is responsible for the 3' incision and the C-terminal half is responsible for the 5' incision. The sequence is that of UvrABC system protein C from Francisella philomiragia subsp. philomiragia (strain ATCC 25017 / CCUG 19701 / FSC 153 / O#319-036).